A 324-amino-acid chain; its full sequence is tRNA(Ile)-lysidine synthase (324 aa).

ATP is bound at residue 33 to 38; sequence SGGPDS.

This sequence belongs to the tRNA(Ile)-lysidine synthase family.

The protein localises to the cytoplasm. The catalysed reaction is cytidine(34) in tRNA(Ile2) + L-lysine + ATP = lysidine(34) in tRNA(Ile2) + AMP + diphosphate + H(+). Functionally, ligates lysine onto the cytidine present at position 34 of the AUA codon-specific tRNA(Ile) that contains the anticodon CAU, in an ATP-dependent manner. Cytidine is converted to lysidine, thus changing the amino acid specificity of the tRNA from methionine to isoleucine. This chain is tRNA(Ile)-lysidine synthase, found in Thermobifida fusca (strain YX).